The primary structure comprises 426 residues: Glutamate-1-semialdehyde 2,1-aminomutase (426 aa).

K268 is modified (N6-(pyridoxal phosphate)lysine).

The protein belongs to the class-III pyridoxal-phosphate-dependent aminotransferase family. HemL subfamily. It depends on pyridoxal 5'-phosphate as a cofactor.

The protein resides in the cytoplasm. It carries out the reaction (S)-4-amino-5-oxopentanoate = 5-aminolevulinate. The protein operates within porphyrin-containing compound metabolism; protoporphyrin-IX biosynthesis; 5-aminolevulinate from L-glutamyl-tRNA(Glu): step 2/2. This Saccharolobus islandicus (strain M.16.27) (Sulfolobus islandicus) protein is Glutamate-1-semialdehyde 2,1-aminomutase.